The following is a 138-amino-acid chain: Nucleoside diphosphate kinase (138 aa).

ATP-binding residues include Lys11, Phe59, Arg87, Thr93, Arg104, and Asn114. His117 (pros-phosphohistidine intermediate) is an active-site residue.

It belongs to the NDK family. Mg(2+) is required as a cofactor.

It localises to the cytoplasm. The enzyme catalyses a 2'-deoxyribonucleoside 5'-diphosphate + ATP = a 2'-deoxyribonucleoside 5'-triphosphate + ADP. The catalysed reaction is a ribonucleoside 5'-diphosphate + ATP = a ribonucleoside 5'-triphosphate + ADP. In terms of biological role, major role in the synthesis of nucleoside triphosphates other than ATP. The ATP gamma phosphate is transferred to the NDP beta phosphate via a ping-pong mechanism, using a phosphorylated active-site intermediate. This is Nucleoside diphosphate kinase from Saccharolobus islandicus (strain Y.N.15.51 / Yellowstone #2) (Sulfolobus islandicus).